The following is an 87-amino-acid chain: MFVVIFGRPGCPYCVRAKNLAEKLKGEVADFDYRYVDIHAEGITKEDLSKSVGKPVETVPQIFIDEKPIGGCTDFEALMKEQFGIVA.

One can recognise a Glutaredoxin domain in the interval 1 to 87; sequence MFVVIFGRPG…LMKEQFGIVA (87 aa). An intrachain disulfide couples Cys-11 to Cys-14.

Belongs to the glutaredoxin family. Monomer.

The protein resides in the cytoplasm. Its function is as follows. Has a glutathione-disulfide oxidoreductase activity in the presence of NADPH and glutathione reductase. Reduces low molecular weight disulfides and proteins. This Haemophilus influenzae (strain ATCC 51907 / DSM 11121 / KW20 / Rd) protein is Glutaredoxin (grxA).